The following is a 197-amino-acid chain: SERTA domain-containing protein 3 (197 aa).

The disordered stretch occupies residues 1-23 (MGGLKRKHSDLEEEEEEEKWDWS). In terms of domain architecture, SERTA spans 27–74 (LRSYQQALLRISLDKVQRSLGPRAPSLRRHVLIHNTLQQLQAAIRLAP).

In terms of assembly, interacts with RPA2.

It localises to the nucleus. The protein resides in the nucleolus. Its function is as follows. Antiviral interferon-stimulated protein that plays a role in innate immunity and in the suppression of viruses through different mechanisms. Plays a role in the late phase response of TLR-induced immune effector expression. Strong transcriptional coactivator. This Mus musculus (Mouse) protein is SERTA domain-containing protein 3 (Sertad3).